A 340-amino-acid polypeptide reads, in one-letter code: Phenylalanine--tRNA ligase alpha subunit (340 aa).

Residue glutamate 254 participates in Mg(2+) binding.

This sequence belongs to the class-II aminoacyl-tRNA synthetase family. Phe-tRNA synthetase alpha subunit type 1 subfamily. As to quaternary structure, tetramer of two alpha and two beta subunits. The cofactor is Mg(2+).

Its subcellular location is the cytoplasm. The enzyme catalyses tRNA(Phe) + L-phenylalanine + ATP = L-phenylalanyl-tRNA(Phe) + AMP + diphosphate + H(+). This is Phenylalanine--tRNA ligase alpha subunit from Caldicellulosiruptor bescii (strain ATCC BAA-1888 / DSM 6725 / KCTC 15123 / Z-1320) (Anaerocellum thermophilum).